The primary structure comprises 506 residues: Maturase K (506 aa).

This sequence belongs to the intron maturase 2 family. MatK subfamily.

It localises to the plastid. The protein resides in the chloroplast. Its function is as follows. Usually encoded in the trnK tRNA gene intron. Probably assists in splicing its own and other chloroplast group II introns. This Angiopteris evecta (Mule's foot fern) protein is Maturase K.